The primary structure comprises 317 residues: Orange carotenoid-binding protein (317 aa).

The OCP N-terminal domain maps to 18–169 (ADVVPATIAR…DMGFTAGKDG (152 aa)). Residues 34 to 38 (EDQLA), 37 to 44 (LALIWFAY), 80 to 83 (TQAM), 107 to 117 (LGFWYRLGELM), 125 to 129 (IPAGY), 151 to 161 (ITVLRNAVVDM), Y201, 245 to 250 (CQNLKL), 273 to 284 (VQTPWFGGNVGM), and W288 each bind echinenone.

Belongs to the orange carotenoid-binding protein family. As to quaternary structure, monomer. Interacts with the APC core of the phycobilisome (PB), probably at a ratio of 1:1 in a light-independent manner; possibly only OCP-R binds to PBs. Interacts with FRP. Detachment from PBs is accelerated by FPR. 3'-hydroxyechinenone serves as cofactor. Post-translationally, proteolytically cleaved into a red 16.7 kDa form named red carotenoid-binding protein (RCP) which lacks 15 residues from the N-terminus and approximately 150 residues from the C-terminus.

It localises to the cellular thylakoid membrane. Functionally, acts as a blue-light photoreceptor and photo-protectant. Essential for inhibiting damaged induced by excess blue-green light via a process known as non-photochemical quenching (NPQ). In the dark or dim light the stable inactive form (OCP-O) is orange, upon illumination with blue-green light it converts to a metastable active red form (OCP-R), inducing energy dissipation, quenching cellular fluorescence via NPQ. One OCP-R molecule is sufficient to quench 1 phycobilisome. More OCP-R accumulates under high-light and low temperature; in the dark OCP-R spontaneously reverts to OCP-O. Reversion of OCP-O is accelerated by FRP. A kinetic study suggests conversion of OCP-O to OCP-R is limited by cis-trans proline isomerization of either Gln224-Pro225 or Pro225-Pro226. This is Orange carotenoid-binding protein from Synechocystis sp. (strain ATCC 27184 / PCC 6803 / Kazusa).